We begin with the raw amino-acid sequence, 338 residues long: Ketol-acid reductoisomerase (NADP(+)) (338 aa).

Residues 1 to 181 enclose the KARI N-terminal Rossmann domain; that stretch reads MKVYYDKDAD…GGTKGGVIET (181 aa). NADP(+) is bound by residues 24 to 27, R47, and S52; that span reads YGSQ. H107 is a catalytic residue. An NADP(+)-binding site is contributed by G133. In terms of domain architecture, KARI C-terminal knotted spans 182–327; that stretch reads NFREETETDL…SQLRAMMPWI (146 aa). Mg(2+) is bound by residues D190, E194, E226, and E230. S251 is a substrate binding site.

This sequence belongs to the ketol-acid reductoisomerase family. Mg(2+) serves as cofactor.

The catalysed reaction is (2R)-2,3-dihydroxy-3-methylbutanoate + NADP(+) = (2S)-2-acetolactate + NADPH + H(+). The enzyme catalyses (2R,3R)-2,3-dihydroxy-3-methylpentanoate + NADP(+) = (S)-2-ethyl-2-hydroxy-3-oxobutanoate + NADPH + H(+). It participates in amino-acid biosynthesis; L-isoleucine biosynthesis; L-isoleucine from 2-oxobutanoate: step 2/4. It functions in the pathway amino-acid biosynthesis; L-valine biosynthesis; L-valine from pyruvate: step 2/4. In terms of biological role, involved in the biosynthesis of branched-chain amino acids (BCAA). Catalyzes an alkyl-migration followed by a ketol-acid reduction of (S)-2-acetolactate (S2AL) to yield (R)-2,3-dihydroxy-isovalerate. In the isomerase reaction, S2AL is rearranged via a Mg-dependent methyl migration to produce 3-hydroxy-3-methyl-2-ketobutyrate (HMKB). In the reductase reaction, this 2-ketoacid undergoes a metal-dependent reduction by NADPH to yield (R)-2,3-dihydroxy-isovalerate. In Methylobacillus flagellatus (strain ATCC 51484 / DSM 6875 / VKM B-1610 / KT), this protein is Ketol-acid reductoisomerase (NADP(+)).